We begin with the raw amino-acid sequence, 78 residues long: Large ribosomal subunit protein bL28 (78 aa).

Residues 1 to 26 form a disordered region; the sequence is MARVCQVTGKRPMSGHNVSHANNKTK.

The protein belongs to the bacterial ribosomal protein bL28 family.

The sequence is that of Large ribosomal subunit protein bL28 from Nitrosomonas europaea (strain ATCC 19718 / CIP 103999 / KCTC 2705 / NBRC 14298).